Reading from the N-terminus, the 178-residue chain is ATP-dependent protease subunit HslV (178 aa).

T7 is an active-site residue. Na(+) contacts are provided by G162, C165, and T168.

The protein belongs to the peptidase T1B family. HslV subfamily. As to quaternary structure, a double ring-shaped homohexamer of HslV is capped on each side by a ring-shaped HslU homohexamer. The assembly of the HslU/HslV complex is dependent on binding of ATP.

Its subcellular location is the cytoplasm. It carries out the reaction ATP-dependent cleavage of peptide bonds with broad specificity.. With respect to regulation, allosterically activated by HslU binding. Its function is as follows. Protease subunit of a proteasome-like degradation complex believed to be a general protein degrading machinery. The polypeptide is ATP-dependent protease subunit HslV (Cupriavidus necator (strain ATCC 17699 / DSM 428 / KCTC 22496 / NCIMB 10442 / H16 / Stanier 337) (Ralstonia eutropha)).